A 643-amino-acid polypeptide reads, in one-letter code: Threonine--tRNA ligase (643 aa).

Residues aspartate 3–threonine 64 enclose the TGS domain. The segment at aspartate 245 to proline 542 is catalytic. The Zn(2+) site is built by cysteine 338, histidine 389, and histidine 519.

This sequence belongs to the class-II aminoacyl-tRNA synthetase family. Homodimer. Zn(2+) is required as a cofactor.

Its subcellular location is the cytoplasm. It catalyses the reaction tRNA(Thr) + L-threonine + ATP = L-threonyl-tRNA(Thr) + AMP + diphosphate + H(+). In terms of biological role, catalyzes the attachment of threonine to tRNA(Thr) in a two-step reaction: L-threonine is first activated by ATP to form Thr-AMP and then transferred to the acceptor end of tRNA(Thr). Also edits incorrectly charged L-seryl-tRNA(Thr). The sequence is that of Threonine--tRNA ligase from Bacillus velezensis (strain DSM 23117 / BGSC 10A6 / LMG 26770 / FZB42) (Bacillus amyloliquefaciens subsp. plantarum).